Reading from the N-terminus, the 132-residue chain is Ribosome-binding factor A (132 aa).

This sequence belongs to the RbfA family. As to quaternary structure, monomer. Binds 30S ribosomal subunits, but not 50S ribosomal subunits or 70S ribosomes.

The protein resides in the cytoplasm. One of several proteins that assist in the late maturation steps of the functional core of the 30S ribosomal subunit. Associates with free 30S ribosomal subunits (but not with 30S subunits that are part of 70S ribosomes or polysomes). Required for efficient processing of 16S rRNA. May interact with the 5'-terminal helix region of 16S rRNA. This is Ribosome-binding factor A from Burkholderia multivorans (strain ATCC 17616 / 249).